The following is a 511-amino-acid chain: LEM domain-containing protein 2 (511 aa).

Position 2 is an N-acetylalanine (alanine 2). The LEM domain maps to 2-42; sequence AGLSDLELRRELQALGFQPGPITDTTRNVYRNKLRRLRGEA. Disordered regions lie at residues 18-110 and 128-206; these read FQPG…SDAS and GLSY…AGRT. The span at 38 to 80 shows a compositional bias: basic and acidic residues; that stretch reads LRGEARLRDDERLREDAGPREDAGPRGPERQREEARLREEAPL. The interaction with lamin A/C complexes stretch occupies residues 80-112; the sequence is LRARPAASVLRSEPWPLSPSPPAPSAASDASGP. A required for nuclear retention and interaction with LMNA isoform C region spans residues 80-141; that stretch reads LRARPAASVL…PPHAGPGPLR (62 aa). 2 stretches are compositionally biased toward low complexity: residues 81–94 and 172–183; these read RARPAASVLRSEPW and APPSASARPHSA. Transmembrane regions (helical) follow at residues 221–241 and 385–405; these read LLLWASLGLLLGFLAILWVKM and VTHVLIFFWCLAFLWGLLILL. A winged-Helix (WH) region spans residues 403 to 511; that stretch reads ILLKYRWRKL…KPSSFSDSER (109 aa). Phosphoserine occurs at positions 505, 507, and 509.

In terms of assembly, interacts (via N-terminus) with LMNA isoform C (via C-terminus) (in vitro). Interacts (via LEM domain) with BANF1. Interacts (via C-terminus) with CHMP7. Interacts (via N-terminus) with tubulin; the interaction causes microtubule bundling and stabilization (in vitro). Post-translationally, phosphorylated; strongly phosphorylated in mitosis compared to G1/S. As to expression, ubiquitously expressed, including liver, brain, heart, skeletal muscle, lung, testis, spleen, kidney and white adipose tissue.

The protein localises to the nucleus inner membrane. Its subcellular location is the nucleus envelope. The protein resides in the cytoplasm. It is found in the cytoskeleton. It localises to the spindle. Functionally, nuclear lamina-associated inner nuclear membrane protein that is involved in nuclear structure organization and maintenance of nuclear envelope (NE) integrity and NE reformation after mitosis. Plays a role as transmembrane adapter for the endosomal sorting complexes required for transport (ESCRT), and is thereby involved in ESCRT-mediated NE reformation. Promotes ESCRT-mediated NE closure by recruiting CHMP7 and downstream ESCRT-III proteins IST1/CHMP8 and CHMP2A to the reforming NE during anaphase. During nuclear reassembly, condenses into a liquid-like coating around microtubule spindles and coassembles with CHMP7 to form a macromolecular O-ring seal at the confluence between membranes, chromatin, and the spindle to facilitate early nuclear sealing. Plays a role in the organization of heterochromatin associated with the NE and in the maintenance of NE organization under mechanical stress. Required for embryonic development and is involved in regulation of several signaling pathways such as MAPK and AKT. Required for myoblast differentiation involving regulation of ERK signaling. Essential for cardiac homeostasis and proper heart function. This chain is LEM domain-containing protein 2 (Lemd2), found in Mus musculus (Mouse).